The sequence spans 379 residues: 3-dehydroquinate synthase (379 aa).

NAD(+) is bound by residues G113–D117, T137–S138, K150, and K159. Residues E192, H256, and H274 each coordinate Zn(2+).

The protein belongs to the sugar phosphate cyclases superfamily. Dehydroquinate synthase family. Requires Co(2+) as cofactor. Zn(2+) serves as cofactor. It depends on NAD(+) as a cofactor.

The protein localises to the cytoplasm. It carries out the reaction 7-phospho-2-dehydro-3-deoxy-D-arabino-heptonate = 3-dehydroquinate + phosphate. It participates in metabolic intermediate biosynthesis; chorismate biosynthesis; chorismate from D-erythrose 4-phosphate and phosphoenolpyruvate: step 2/7. Its function is as follows. Catalyzes the conversion of 3-deoxy-D-arabino-heptulosonate 7-phosphate (DAHP) to dehydroquinate (DHQ). This chain is 3-dehydroquinate synthase, found in Zymomonas mobilis subsp. mobilis (strain ATCC 31821 / ZM4 / CP4).